The sequence spans 86 residues: Mu-theraphotoxin-Hhn1c (86 aa).

Residues 1-21 form the signal peptide; that stretch reads MKASMFLALAGLALLFVVCYA. Residues 22–49 constitute a propeptide that is removed on maturation; that stretch reads SESEEKEFSNELLSSVLAVDDNSKGEER. Intrachain disulfides connect cysteine 51-cysteine 66, cysteine 58-cysteine 73, and cysteine 65-cysteine 80. Isoleucine 84 is subject to Isoleucine amide.

This sequence belongs to the neurotoxin 10 (Hwtx-1) family. 22 (Htx-4) subfamily. In terms of assembly, monomer. In terms of tissue distribution, expressed by the venom gland.

Its subcellular location is the secreted. Functionally, neurotoxin. Selectively blocks neuronal tetrodotoxin-sensitive voltage-gated sodium channels (Nav). Does not affect tetrodotoxin-resistant voltage-gated sodium channels or calcium channels. In Cyriopagopus hainanus (Chinese bird spider), this protein is Mu-theraphotoxin-Hhn1c.